A 297-amino-acid chain; its full sequence is Cytidine deaminase (297 aa).

CMP/dCMP-type deaminase domains lie at 54-174 (SSVE…FGPK) and 192-297 (LRGD…YIEV). Residue 95–97 (NQE) coordinates substrate. H108 provides a ligand contact to Zn(2+). E110 acts as the Proton donor in catalysis. Residues C135 and C138 each coordinate Zn(2+).

This sequence belongs to the cytidine and deoxycytidylate deaminase family. As to quaternary structure, homodimer. Zn(2+) serves as cofactor.

The enzyme catalyses cytidine + H2O + H(+) = uridine + NH4(+). It carries out the reaction 2'-deoxycytidine + H2O + H(+) = 2'-deoxyuridine + NH4(+). Functionally, this enzyme scavenges exogenous and endogenous cytidine and 2'-deoxycytidine for UMP synthesis. This chain is Cytidine deaminase, found in Actinobacillus pleuropneumoniae serotype 5b (strain L20).